We begin with the raw amino-acid sequence, 174 residues long: Shikimate kinase 2 (174 aa).

Gly12–Thr17 lines the ATP pocket. Mg(2+)-binding residues include Thr16 and Asp32. Residues Asp34, Arg58, and Gly79 each coordinate substrate. The tract at residues Arg112–Lys126 is LID domain. Arg120 lines the ATP pocket. A substrate-binding site is contributed by Arg139. Gln155 contributes to the ATP binding site.

It belongs to the shikimate kinase family. AroL subfamily. In terms of assembly, monomer. Mg(2+) is required as a cofactor.

The protein localises to the cytoplasm. The catalysed reaction is shikimate + ATP = 3-phosphoshikimate + ADP + H(+). It functions in the pathway metabolic intermediate biosynthesis; chorismate biosynthesis; chorismate from D-erythrose 4-phosphate and phosphoenolpyruvate: step 5/7. Its function is as follows. Catalyzes the specific phosphorylation of the 3-hydroxyl group of shikimic acid using ATP as a cosubstrate. The polypeptide is Shikimate kinase 2 (Sodalis glossinidius (strain morsitans)).